Consider the following 250-residue polypeptide: Golgi SNAP receptor complex member 1 (250 aa).

N-acetylalanine is present on A2. Topologically, residues 2-229 are cytoplasmic; sequence AAGTSNYWED…QRINLRKRRD (228 aa). A coiled-coil region spans residues 9-27; sequence WEDLRKQARQLENELDLKL. A disordered region spans residues 37 to 59; the sequence is YSHSGSRDGGRDRYSSDTTPLLN. Positions 41–51 are enriched in basic and acidic residues; it reads GSRDGGRDRYS. A coiled-coil region spans residues 72-93; the sequence is IEIEQLLARLTGVNDKMAEYTH. The residue at position 141 (S141) is a Phosphoserine. A helical; Anchor for type IV membrane protein membrane pass occupies residues 230–250; that stretch reads SLILGGVIGICTILLLLYAFH.

Belongs to the GOSR1 family. In terms of assembly, component of several multiprotein Golgi SNARE complexes. Identified in a SNARE complex with BET1, STX5 and YKT6, in a SNARE complex with BET1L, STX5 and YKT6, in a SNARE complex with STX5, GOSR2, SEC22B and BET1, and in complex with STX5 and COG3. Interacts with GABARAPL2.

It localises to the golgi apparatus membrane. In terms of biological role, involved in transport from the ER to the Golgi apparatus as well as in intra-Golgi transport. It belongs to a super-family of proteins called t-SNAREs or soluble NSF (N-ethylmaleimide-sensitive factor) attachment protein receptor. May play a protective role against hydrogen peroxide induced cytotoxicity under glutathione depleted conditions in neuronal cells by regulating the intracellular ROS levels via inhibition of p38 MAPK (MAPK11, MAPK12, MAPK13 and MAPK14). Participates in docking and fusion stage of ER to cis-Golgi transport. Plays an important physiological role in VLDL-transport vesicle-Golgi fusion and thus in VLDL delivery to the hepatic cis-Golgi. This chain is Golgi SNAP receptor complex member 1 (Gosr1), found in Mus musculus (Mouse).